A 208-amino-acid chain; its full sequence is Small ribosomal subunit protein uS4A (208 aa).

The region spanning 98–159 (SRLDNVAYNM…HAKSYLRIKA (62 aa)) is the S4 RNA-binding domain.

The protein belongs to the universal ribosomal protein uS4 family. In terms of assembly, part of the 30S ribosomal subunit. Contacts protein S5. The interaction surface between S4 and S5 is involved in control of translational fidelity.

In terms of biological role, one of the primary rRNA binding proteins, it binds directly to 16S rRNA where it nucleates assembly of the body of the 30S subunit. Functionally, with S5 and S12 plays an important role in translational accuracy. The chain is Small ribosomal subunit protein uS4A (rpsD1) from Nitrosomonas europaea (strain ATCC 19718 / CIP 103999 / KCTC 2705 / NBRC 14298).